The sequence spans 609 residues: Alpha-glucosides permease MPH2 (609 aa).

Topologically, residues 1-106 are cytoplasmic; that stretch reads MKNLSFLINR…AAAWSLLVST (106 aa). A helical transmembrane segment spans residues 107-127; sequence TLIMEGYDTAILGAFYALPIF. Residues 128–142 are Extracellular-facing; sequence QRKFGSQNDKTGEWE. A helical membrane pass occupies residues 143–163; it reads ISASWQIGLTLCYMAGEIVGL. Over 164-178 the chain is Cytoplasmic; the sequence is QLTGPSVDLVGNRYT. The chain crosses the membrane as a helical span at residues 179-199; sequence LIIALFFLAAFTFILYFCNSL. Position 200 (glycine 200) is a topological domain, extracellular. Residues 201–221 form a helical membrane-spanning segment; the sequence is MIAVGQALCGMPWGCFQCLTV. At 222-234 the chain is on the cytoplasmic side; the sequence is SYASEICPLALRY. A helical transmembrane segment spans residues 235-255; the sequence is YLTTYSNLCWLFGQLFAAGIM. The Extracellular segment spans residues 256 to 270; sequence KNSQKKYADSELGYK. Residues 271 to 291 traverse the membrane as a helical segment; it reads LPFALQWILPVPLALGIFFAP. Over 292–363 the chain is Cytoplasmic; that stretch reads ESPWWLVKKG…EDKINRRRTR (72 aa). The chain crosses the membrane as a helical span at residues 364-384; the sequence is ITCLCWAGQATCGSILIGYST. At 385–397 the chain is on the extracellular side; that stretch reads YFYEKAGVSTEMS. The chain crosses the membrane as a helical span at residues 398–418; that stretch reads FTFSIIQYCLGICATFLSWWA. The Cytoplasmic segment spans residues 419–426; that stretch reads SKYFGRYD. The helical transmembrane segment at 427 to 447 threads the bilayer; the sequence is LYAFGLAFQTIVFFIIGGLGC. The Extracellular segment spans residues 448–459; the sequence is SSTHGSKMGSGS. The helical transmembrane segment at 460-480 threads the bilayer; that stretch reads LLMAVAFFYNLGIAPVVFCLV. Residues 481–492 are Cytoplasmic-facing; sequence SEMPSSRLRTKT. A helical membrane pass occupies residues 493–513; it reads IILARNTYNVVSIICSVLILY. Topologically, residues 514–525 are extracellular; the sequence is QLNSKKWNWGAK. Residues 526–546 traverse the membrane as a helical segment; sequence SGFFWGVLCFCTLIWAVVDLP. Residues 547–609 lie on the Cytoplasmic side of the membrane; the sequence is ETAGKTFVEI…QRNSNVSHHL (63 aa).

It belongs to the major facilitator superfamily. Sugar transporter (TC 2.A.1.1) family.

It localises to the cell membrane. Functionally, high-affinity uptake of maltose and maltotriose. Also transports alpha-methylglucoside, glucose and turanose but not melezitose or trehalose. The chain is Alpha-glucosides permease MPH2 (MPH2) from Saccharomyces cerevisiae (strain ATCC 204508 / S288c) (Baker's yeast).